The sequence spans 126 residues: Large ribosomal subunit protein bL19 (126 aa).

It belongs to the bacterial ribosomal protein bL19 family.

Functionally, this protein is located at the 30S-50S ribosomal subunit interface and may play a role in the structure and function of the aminoacyl-tRNA binding site. The polypeptide is Large ribosomal subunit protein bL19 (Dechloromonas aromatica (strain RCB)).